A 78-amino-acid polypeptide reads, in one-letter code: Dihydrofolate reductase type 2 (78 aa).

NADP(+)-binding positions include Lys-32 and 66 to 69 (VQIY). A substrate-binding site is contributed by Ile-68.

In terms of assembly, homotetramer.

The catalysed reaction is (6S)-5,6,7,8-tetrahydrofolate + NADP(+) = 7,8-dihydrofolate + NADPH + H(+). It participates in cofactor biosynthesis; tetrahydrofolate biosynthesis; 5,6,7,8-tetrahydrofolate from 7,8-dihydrofolate: step 1/1. Functionally, key enzyme in folate metabolism. Catalyzes an essential reaction for de novo glycine and purine synthesis, and for DNA precursor synthesis. The sequence is that of Dihydrofolate reductase type 2 from Escherichia coli.